The chain runs to 358 residues: Probable D-xylulose reductase A (358 aa).

Cysteine 47, histidine 72, and glutamate 73 together coordinate Zn(2+). 182–187 (GAGPVG) provides a ligand contact to NAD(+).

The protein belongs to the zinc-containing alcohol dehydrogenase family. Requires Zn(2+) as cofactor.

The enzyme catalyses xylitol + NAD(+) = D-xylulose + NADH + H(+). It participates in carbohydrate degradation; L-arabinose degradation via L-arabinitol; D-xylulose 5-phosphate from L-arabinose (fungal route): step 4/5. In terms of biological role, xylitol dehydrogenase which catalyzes the conversion of xylitol to D-xylulose. Xylose is a major component of hemicelluloses such as xylan. Most fungi utilize D-xylose via three enzymatic reactions, xylose reductase (XR), xylitol dehydrogenase (XDH), and xylulokinase, to form xylulose 5-phosphate, which enters pentose phosphate pathway. The polypeptide is Probable D-xylulose reductase A (xdhA) (Neosartorya fischeri (strain ATCC 1020 / DSM 3700 / CBS 544.65 / FGSC A1164 / JCM 1740 / NRRL 181 / WB 181) (Aspergillus fischerianus)).